The chain runs to 326 residues: Transcription factor WRKY45-1 (326 aa).

Disordered regions lie at residues 67–114 and 252–288; these read GGEG…SVVV and GVGS…FGPD. The WRKY DNA-binding region spans 112-180; sequence VVVKNLDDGQ…YIGEHTCRDP (69 aa). Residues 273-283 show a composition bias toward gly residues; that stretch reads RGGGGGGGVAG.

Belongs to the WRKY group III family. In terms of tissue distribution, expressed in aleurone cells.

The protein localises to the nucleus. In terms of biological role, transcriptional activator involved in defense responses against pathogens. Acts as a positive regulator of defense responses against the rice blast fungus Magnaporthe oryzae. Acts through W-boxes, which are cis-elements that are enriched in the promoters of several defense-related genes. Plays an important role in the benzothiadiazole-induced disease resistance by mediating salicylic acid (SA) defense signaling pathway, independently of the disease resistance gene NPR1/NH1. Acts as a negative regulator of defense responses against the bacterial blight Xanthomonas oryzae pv oryzae (Xoo) and the bacterial streak Xanthomonas oryzae pv oryzicola (Xoc). Acts downstream of abscisic acid (ABA) signaling in response to the rice blast fungus. ABA is a negative regulator of defense responses that interacts antagonistically with salicylic acid (SA) signaling pathway. Acts as a negative regulator of ABA signaling that suppresses growth of seedlings. Does not seem to be involved in the regulation of salt stress response. Acts as a negative regulator of cold stress response. Acts as a negative regulator of drought stress response. The polypeptide is Transcription factor WRKY45-1 (Oryza sativa subsp. japonica (Rice)).